A 359-amino-acid polypeptide reads, in one-letter code: 3-dehydroshikimate dehydratase (359 aa).

This sequence belongs to the bacterial two-domain DSD family. As to quaternary structure, monomer.

It carries out the reaction 3-dehydroshikimate = 3,4-dihydroxybenzoate + H2O. It functions in the pathway aromatic compound metabolism; 3,4-dihydroxybenzoate biosynthesis; 3,4-dihydroxybenzoate from 3-dehydroquinate: step 2/2. With respect to regulation, divalent cations such as Mg(2+), but also MO(2+), Mn(2+), Ba(2+), and Co(2+) activate the enzyme, whereas monovalent cations as K(+), Na(+), and NH4(+) decrease its activity slightly. 3-dehydroshikimate dehydratase; part of the qa gene cluster that mediates the catabolism of quinic acid (QA) and as such, allows the use of QA as a sole carbon source. Catalyzes the third reaction in the inducible quinic acid catabolic pathway by converting dehydroshikimate to protocatechuate. The qa cluster encodes 3 inducible enymes (qa-2, qa-3 and qa-4) catalyzing the first three reactions in the catabolism of quinic acid to protocatechuic acid (also known as 3,4-Dihydroxybenzoic acid). In Neurospora crassa (strain ATCC 24698 / 74-OR23-1A / CBS 708.71 / DSM 1257 / FGSC 987), this protein is 3-dehydroshikimate dehydratase.